We begin with the raw amino-acid sequence, 622 residues long: Meiotic expression up-regulated protein 25 (622 aa).

The polypeptide is Meiotic expression up-regulated protein 25 (meu25) (Schizosaccharomyces pombe (strain 972 / ATCC 24843) (Fission yeast)).